The chain runs to 183 residues: Capsid protein (183 aa).

Positions 136-183 are disordered; it reads NAPILSTLPETTVVRRRGRSPRRRTPSPRRRRSQSPRRRRSQSPASQC. Residues 149–176 show a composition bias toward basic residues; sequence VRRRGRSPRRRTPSPRRRRSQSPRRRRS. 3 positions are modified to phosphoserine; by host: serine 155, serine 162, and serine 170. One copy of the 1; half-length repeat lies at 155 to 161; it reads SPRRRTP. Positions 155–177 are 3 X 8 AA repeats of S-P-R-R-R-[PR]-S-Q; the sequence is SPRRRTPSPRRRRSQSPRRRRSQ. Positions 158–175 match the Bipartite nuclear localization signal motif; sequence RRTPSPRRRRSQSPRRRR. 2 repeat units span residues 162-169 and 170-177. The RNA binding stretch occupies residues 177-183; sequence QSPASQC.

It belongs to the orthohepadnavirus core antigen family. In terms of assembly, homodimerizes, then multimerizes. Interacts with cytosol exposed regions of viral L glycoprotein present in the reticulum-to-Golgi compartment. Interacts with human FLNB. Phosphorylated form interacts with host importin alpha; this interaction depends on the exposure of the NLS, which itself depends upon genome maturation and/or phosphorylation of the capsid protein. Interacts with host NUP153. In terms of processing, phosphorylated by host SRPK1, SRPK2, and maybe protein kinase C or GAPDH. Phosphorylation is critical for pregenomic RNA packaging. Protein kinase C phosphorylation is stimulated by HBx protein and may play a role in transport of the viral genome to the nucleus at the late step during the viral replication cycle.

It is found in the virion. The protein resides in the host cytoplasm. In terms of biological role, self assembles to form an icosahedral capsid. Most capsids appear to be large particles with an icosahedral symmetry of T=4 and consist of 240 copies of capsid protein, though a fraction forms smaller T=3 particles consisting of 180 capsid proteins. Entering capsids are transported along microtubules to the nucleus. Phosphorylation of the capsid is thought to induce exposure of nuclear localization signal in the C-terminal portion of the capsid protein that allows binding to the nuclear pore complex via the importin (karyopherin-) alpha and beta. Capsids are imported in intact form through the nuclear pore into the nuclear basket, where it probably binds NUP153. Only capsids that contain the mature viral genome can release the viral DNA and capsid protein into the nucleoplasm. Immature capsids get stuck in the basket. Capsids encapsulate the pre-genomic RNA and the P protein. Pre-genomic RNA is reverse-transcribed into DNA while the capsid is still in the cytoplasm. The capsid can then either be directed to the nucleus, providing more genomes for transcription, or bud through the endoplasmic reticulum to provide new virions. In Hepatitis B virus genotype F2 (isolate Brazil/w4B) (HBV-F), this protein is Capsid protein.